The sequence spans 850 residues: Adenylate cyclase (850 aa).

The tract at residues methionine 1–leucine 535 is catalytic. Residues lysine 541–histidine 850 form a regulatory region.

This sequence belongs to the adenylyl cyclase class-1 family.

Its subcellular location is the cytoplasm. It carries out the reaction ATP = 3',5'-cyclic AMP + diphosphate. With respect to regulation, the regulatory domain is involved in the regulation of cyclase activity by the carbon source. This chain is Adenylate cyclase (cya), found in Yersinia pestis.